Consider the following 803-residue polypeptide: Ribonuclease II, chloroplastic/mitochondrial (803 aa).

The transit peptide at 1–35 (MMSVRAINGCSIIRTATSAGGPPVSLFRHRIQRLR) directs the protein to the chloroplast and mitochondrion. One can recognise an RNB domain in the interval 399-694 (RIDLTHLKVY…AHYQIKAFLR (296 aa)).

Belongs to the RNR ribonuclease family. In terms of tissue distribution, expressed in seedlings, roots, leaves and flowers.

Its subcellular location is the mitochondrion. It localises to the plastid. The protein resides in the chloroplast. The enzyme catalyses Exonucleolytic cleavage in the 3'- to 5'-direction to yield nucleoside 5'-phosphates.. Its function is as follows. 3'-5' exoribonuclease that catalyzes 3' maturation of chloroplast and mitochondrion ribosomal RNAs; degrades short nucleotidic extensions to generate the mature 3'-ends. Involved in the maturation of 23S, 16S and 5S rRNAs. The chain is Ribonuclease II, chloroplastic/mitochondrial (RNR1) from Arabidopsis thaliana (Mouse-ear cress).